Here is a 476-residue protein sequence, read N- to C-terminus: MASPFSGALQLTDLDDFIGPSQNCIKPVKVAKKPGSGIAKIHIEDDGSYFQVNQDGRTQKLEKAKVSLNDCLACSGCVTSAETVLITQQSHEELRKVLDANKEAAPGQQRLVVVSISPQSRASLAARFRLDPTDTARKLTSFFKKIGVHFVFDTAFARNFSLLESQKEFVQRFREQANSREALPVLASACPGWICYAEKTHGNFILPYISTARSPQQVMGSLVKDFFAQQQLLTPDKIYHVTVMPCYDKKLEASRPDFFNQEYQTRDVDCVLTTGEVFRLLEEEGVSLTELEPAPLDGLTSSVSAEEPSSHRGGGSGGYLEHVFRHAAQELFGIHVAEVTYQPLRNKDFQEVTLEREGQVLLRFAVAYGFRNIQNLVQKLKRGRCPYHYVEVMACPSGCLNGGGQLKAPDTEGSELLQQLERLYSMVRTEAPEDAPGVQELYQHWLQGEDSERASRLLHTQYHAVEKPSSGLSIRW.

Position 2 is an N-acetylalanine (A2). The [4Fe-4S] cluster site is built by C24, C71, C74, C77, C190, and C246. The disordered stretch occupies residues 297 to 316; sequence DGLTSSVSAEEPSSHRGGGS. [4Fe-4S] cluster is bound by residues C395 and C399.

Belongs to the NARF family. As to quaternary structure, external component of the CIA complex. In the CIA complex, interacts directly with CIAO1 and MMS19.

Component of the cytosolic iron-sulfur protein assembly (CIA) complex, a multiprotein complex that mediates the incorporation of iron-sulfur cluster into extramitochondrial Fe/S proteins. Seems to negatively regulate the level of HIF1A expression, although this effect could be indirect. This Mus musculus (Mouse) protein is Cytosolic iron-sulfur assembly component 3 (Ciao3).